Consider the following 533-residue polypeptide: T-complex protein 1 subunit delta (533 aa).

The span at Met-1–Thr-15 shows a compositional bias: polar residues. The tract at residues Met-1–Val-25 is disordered. Residues Phe-16–Val-25 show a composition bias toward basic and acidic residues.

The protein belongs to the TCP-1 chaperonin family. As to quaternary structure, heterooligomeric complex of about 850 to 900 kDa that forms two stacked rings, 12 to 16 nm in diameter.

The protein resides in the cytoplasm. Its function is as follows. Molecular chaperone; assists the folding of proteins upon ATP hydrolysis. Known to play a role, in vitro, in the folding of actin and tubulin. The polypeptide is T-complex protein 1 subunit delta (CCT4) (Debaryomyces hansenii (strain ATCC 36239 / CBS 767 / BCRC 21394 / JCM 1990 / NBRC 0083 / IGC 2968) (Yeast)).